The following is a 130-amino-acid chain: MVRPANKILIRKNKRRTSKGVIHVQASFNNTIITITDVRGQVISWSSAGASGFKAAKKSTPFAAQIAAENALRVLIDQGMKQAEVMLSGPGRGRDTALRAIINSGIQLSFVRDVTPMPHNGCRAPKKRRV.

Belongs to the universal ribosomal protein uS11 family. In terms of assembly, part of the 30S ribosomal subunit.

It is found in the plastid. It localises to the chloroplast. In Zygnema circumcarinatum (Green alga), this protein is Small ribosomal subunit protein uS11c.